We begin with the raw amino-acid sequence, 264 residues long: Thiazole synthase (264 aa).

Catalysis depends on Lys101, which acts as the Schiff-base intermediate with DXP. 1-deoxy-D-xylulose 5-phosphate contacts are provided by residues Gly162, 188–189, and 210–211; these read AG and NT.

It belongs to the ThiG family. As to quaternary structure, homotetramer. Forms heterodimers with either ThiH or ThiS.

The protein resides in the cytoplasm. It catalyses the reaction [ThiS sulfur-carrier protein]-C-terminal-Gly-aminoethanethioate + 2-iminoacetate + 1-deoxy-D-xylulose 5-phosphate = [ThiS sulfur-carrier protein]-C-terminal Gly-Gly + 2-[(2R,5Z)-2-carboxy-4-methylthiazol-5(2H)-ylidene]ethyl phosphate + 2 H2O + H(+). Its pathway is cofactor biosynthesis; thiamine diphosphate biosynthesis. Catalyzes the rearrangement of 1-deoxy-D-xylulose 5-phosphate (DXP) to produce the thiazole phosphate moiety of thiamine. Sulfur is provided by the thiocarboxylate moiety of the carrier protein ThiS. In vitro, sulfur can be provided by H(2)S. The protein is Thiazole synthase of Chromobacterium violaceum (strain ATCC 12472 / DSM 30191 / JCM 1249 / CCUG 213 / NBRC 12614 / NCIMB 9131 / NCTC 9757 / MK).